The primary structure comprises 455 residues: Ribulose bisphosphate carboxylase large chain (455 aa).

Lysine 5 carries the post-translational modification N6,N6,N6-trimethyllysine. Residues asparagine 114 and threonine 164 each contribute to the substrate site. The active-site Proton acceptor is lysine 166. Lysine 168 contributes to the substrate binding site. Residues lysine 192, aspartate 194, and glutamate 195 each coordinate Mg(2+). Lysine 192 is subject to N6-carboxylysine. Catalysis depends on histidine 285, which acts as the Proton acceptor. Arginine 286, histidine 318, and serine 370 together coordinate substrate.

The protein belongs to the RuBisCO large chain family. Type I subfamily. Heterohexadecamer of 8 large chains and 8 small chains; disulfide-linked. The disulfide link is formed within the large subunit homodimers. It depends on Mg(2+) as a cofactor. The disulfide bond which can form in the large chain dimeric partners within the hexadecamer appears to be associated with oxidative stress and protein turnover.

Its subcellular location is the plastid. It localises to the chloroplast. The enzyme catalyses 2 (2R)-3-phosphoglycerate + 2 H(+) = D-ribulose 1,5-bisphosphate + CO2 + H2O. It catalyses the reaction D-ribulose 1,5-bisphosphate + O2 = 2-phosphoglycolate + (2R)-3-phosphoglycerate + 2 H(+). Functionally, ruBisCO catalyzes two reactions: the carboxylation of D-ribulose 1,5-bisphosphate, the primary event in carbon dioxide fixation, as well as the oxidative fragmentation of the pentose substrate in the photorespiration process. Both reactions occur simultaneously and in competition at the same active site. This is Ribulose bisphosphate carboxylase large chain from Lupinus albus (White lupine).